Here is a 226-residue protein sequence, read N- to C-terminus: Histone H2B.v1 (226 aa).

Residues 100 to 130 form a disordered region; it reads FNSAKQYPPQPPPAKTATPSSPSSIPAPPIS. The segment covering 114–123 has biased composition (low complexity); it reads KTATPSSPSS.

The protein belongs to the histone H2B family.

This Dictyostelium discoideum (Social amoeba) protein is Histone H2B.v1 (H2Bv1).